The primary structure comprises 786 residues: Leucine-rich repeat extensin-like protein 2 (786 aa).

An N-terminal signal peptide occupies residues 1-28 (MLLFPSTSLRLFFFLFLLFSSCFLQIRG). 2 N-linked (GlcNAc...) asparagine glycosylation sites follow: Asn73 and Asn79. LRR repeat units follow at residues 100-124 (TRVV…LGLL), 125-147 (TDLA…TFKH), 149-172 (KLLF…VLSL), 173-196 (PSLK…LFDK), 198-219 (LDAI…MGNS), 221-243 (VSAL…GLMG), 244-267 (KTLN…IGNL), 268-291 (KNVT…IGNM), and 292-315 (KSLE…ICQL). N-linked (GlcNAc...) asparagine glycans are attached at residues Asn255 and Asn269. Residues Asn320 and Asn346 are each glycosylated (N-linked (GlcNAc...) asparagine). 4 disordered regions span residues 352 to 372 (IDGK…SRSV), 390 to 589 (FKMS…YYAV), 624 to 645 (PPVY…YYPP), and 694 to 786 (PPPS…IPYY). A compositionally biased stretch (basic and acidic residues) spans 353–362 (DGKEDQRSSK). The interval 384–786 (SPPPPSFKMS…SPPPPSIPYY (403 aa)) is contains the Ser-Pro(4) repeats. Composition is skewed to pro residues over residues 460-477 (YPPP…PPPS), 487-542 (YPPP…PPPK), and 566-589 (SPPP…YYAV). Composition is skewed to pro residues over residues 694-713 (PPPS…PPST), 720-737 (PASP…PPPK), 752-769 (PTPP…PLPP), and 777-786 (SPPPPSIPYY).

In terms of processing, hydroxylated on proline residues in the S-P-P-P-P repeat. O-glycosylated on hydroxyprolines. As to expression, mostly expressed in roots, also present in stems at low levels. In roots, confined to differentiation zones, the collet, and meristematic cells of tips.

It is found in the secreted. The protein localises to the cell wall. Functionally, modulates cell morphogenesis by regulating cell wall formation and assembly, and/or growth polarization. Together with LRX2, component of the extracellular mechanism regulating root hair morphogenesis and elongation. The chain is Leucine-rich repeat extensin-like protein 2 (LRX2) from Arabidopsis thaliana (Mouse-ear cress).